A 173-amino-acid chain; its full sequence is ATP synthase subunit b (173 aa).

A helical transmembrane segment spans residues 18 to 38 (IFWSLVILIIVAVFFYKFFLP).

Belongs to the ATPase B chain family. In terms of assembly, F-type ATPases have 2 components, F(1) - the catalytic core - and F(0) - the membrane proton channel. F(1) has five subunits: alpha(3), beta(3), gamma(1), delta(1), epsilon(1). F(0) has three main subunits: a(1), b(2) and c(10-14). The alpha and beta chains form an alternating ring which encloses part of the gamma chain. F(1) is attached to F(0) by a central stalk formed by the gamma and epsilon chains, while a peripheral stalk is formed by the delta and b chains.

The protein resides in the cell membrane. In terms of biological role, f(1)F(0) ATP synthase produces ATP from ADP in the presence of a proton or sodium gradient. F-type ATPases consist of two structural domains, F(1) containing the extramembraneous catalytic core and F(0) containing the membrane proton channel, linked together by a central stalk and a peripheral stalk. During catalysis, ATP synthesis in the catalytic domain of F(1) is coupled via a rotary mechanism of the central stalk subunits to proton translocation. Functionally, component of the F(0) channel, it forms part of the peripheral stalk, linking F(1) to F(0). In Bifidobacterium adolescentis (strain ATCC 15703 / DSM 20083 / NCTC 11814 / E194a), this protein is ATP synthase subunit b.